We begin with the raw amino-acid sequence, 285 residues long: tRNA-cytidine(32) 2-sulfurtransferase (285 aa).

A PP-loop motif motif is present at residues serine 49–serine 54. Residues cysteine 124, cysteine 127, and cysteine 215 each coordinate [4Fe-4S] cluster.

It belongs to the TtcA family. In terms of assembly, homodimer. Requires Mg(2+) as cofactor. [4Fe-4S] cluster serves as cofactor.

It is found in the cytoplasm. It carries out the reaction cytidine(32) in tRNA + S-sulfanyl-L-cysteinyl-[cysteine desulfurase] + AH2 + ATP = 2-thiocytidine(32) in tRNA + L-cysteinyl-[cysteine desulfurase] + A + AMP + diphosphate + H(+). Its pathway is tRNA modification. Functionally, catalyzes the ATP-dependent 2-thiolation of cytidine in position 32 of tRNA, to form 2-thiocytidine (s(2)C32). The sulfur atoms are provided by the cysteine/cysteine desulfurase (IscS) system. In Hahella chejuensis (strain KCTC 2396), this protein is tRNA-cytidine(32) 2-sulfurtransferase.